Consider the following 163-residue polypeptide: Crossover junction endodeoxyribonuclease RuvC (163 aa).

Catalysis depends on residues Asp8, Glu68, and Asp140. Residues Asp8, Glu68, and Asp140 each contribute to the Mg(2+) site.

It belongs to the RuvC family. As to quaternary structure, homodimer which binds Holliday junction (HJ) DNA. The HJ becomes 2-fold symmetrical on binding to RuvC with unstacked arms; it has a different conformation from HJ DNA in complex with RuvA. In the full resolvosome a probable DNA-RuvA(4)-RuvB(12)-RuvC(2) complex forms which resolves the HJ. Mg(2+) serves as cofactor.

The protein localises to the cytoplasm. The enzyme catalyses Endonucleolytic cleavage at a junction such as a reciprocal single-stranded crossover between two homologous DNA duplexes (Holliday junction).. Its function is as follows. The RuvA-RuvB-RuvC complex processes Holliday junction (HJ) DNA during genetic recombination and DNA repair. Endonuclease that resolves HJ intermediates. Cleaves cruciform DNA by making single-stranded nicks across the HJ at symmetrical positions within the homologous arms, yielding a 5'-phosphate and a 3'-hydroxyl group; requires a central core of homology in the junction. The consensus cleavage sequence is 5'-(A/T)TT(C/G)-3'. Cleavage occurs on the 3'-side of the TT dinucleotide at the point of strand exchange. HJ branch migration catalyzed by RuvA-RuvB allows RuvC to scan DNA until it finds its consensus sequence, where it cleaves and resolves the cruciform DNA. This chain is Crossover junction endodeoxyribonuclease RuvC, found in Erythrobacter litoralis (strain HTCC2594).